The primary structure comprises 338 residues: MIEDLKELQNKAEAEIKAAKTETDLAAVRVRYLGRKGLLTQFLRNLGQLSIEEKQIFGKRANEIKTILSSRFDEAQTVIAALKKESVLRAEALDVTLPGRSSGYGRAHPVTQVLEEICAIFSEIGFSIAEGPEIESDYYNFEALNIPKDHPARDMQDTFYVEEAIVLRTHTSPVQIRTMEKQSPPVKIISPGRVYRPDSDVSHTPMFHQVEGLLVDRGITFGDLKGLLNAFLKQIFGEETVLRFRPSYFPFTEPSAEVDIRCVICRGKGCRVCGQSGWLEILGSGMVDPAVFENVGYDPEEYSGFAFGLGVERIAMLKYGITDIRLFFENERRFLQQF.

E253 serves as a coordination point for Mg(2+).

This sequence belongs to the class-II aminoacyl-tRNA synthetase family. Phe-tRNA synthetase alpha subunit type 1 subfamily. As to quaternary structure, tetramer of two alpha and two beta subunits. The cofactor is Mg(2+).

The protein localises to the cytoplasm. It catalyses the reaction tRNA(Phe) + L-phenylalanine + ATP = L-phenylalanyl-tRNA(Phe) + AMP + diphosphate + H(+). The polypeptide is Phenylalanine--tRNA ligase alpha subunit (Syntrophus aciditrophicus (strain SB)).